Consider the following 70-residue polypeptide: Conotoxin AbVIB (70 aa).

An N-terminal signal peptide occupies residues 1 to 17 (VIIIAVLFLTACQLTTA). The propeptide occupies 18–41 (ETSSRGKQKHRALRSTDKNSKLTR). The interval 20–41 (SSRGKQKHRALRSTDKNSKLTR) is disordered. 3 disulfides stabilise this stretch: Cys43/Cys57, Cys50/Cys61, and Cys56/Cys68.

It belongs to the conotoxin O1 superfamily. In terms of tissue distribution, expressed by the venom duct.

Its subcellular location is the secreted. The polypeptide is Conotoxin AbVIB (Conus abbreviatus (Abbreviated cone)).